A 93-amino-acid polypeptide reads, in one-letter code: Long neurotoxin 2 (93 aa).

The N-terminal stretch at methionine 1–threonine 21 is a signal peptide. Disulfide bonds link cysteine 24–cysteine 42, cysteine 35–cysteine 63, cysteine 48–cysteine 52, cysteine 67–cysteine 78, and cysteine 79–cysteine 84.

The protein belongs to the three-finger toxin family. Long-chain subfamily. Type II alpha-neurotoxin sub-subfamily. In terms of tissue distribution, expressed by the venom gland.

The protein resides in the secreted. In terms of biological role, binds with high affinity to muscular (alpha-1/CHRNA1) and neuronal (alpha-7/CHRNA7) nicotinic acetylcholine receptor (nAChR) and inhibits acetylcholine from binding to the receptor, thereby impairing neuromuscular and neuronal transmission. This chain is Long neurotoxin 2, found in Hydrophis hardwickii (Hardwick's spine-bellied seasnake).